Reading from the N-terminus, the 91-residue chain is Large ribosomal subunit protein bL27 (91 aa).

Residues 1–25 are disordered; sequence MAHKKGAASSNNGRDSESKRLGVKR.

Belongs to the bacterial ribosomal protein bL27 family.

This is Large ribosomal subunit protein bL27 from Corynebacterium kroppenstedtii (strain DSM 44385 / JCM 11950 / CIP 105744 / CCUG 35717).